We begin with the raw amino-acid sequence, 2528 residues long: Highly reducing polyketide synthase pspA (2528 aa).

Residues 1–53 (MLAQDVEFVDLPPPEATAGAATTDNETSSFNSNPVPTPSEASSIGPPHQLPVP) are disordered. Residues 24-42 (DNETSSFNSNPVPTPSEAS) are compositionally biased toward polar residues. Residues 63-483 (VEPMAICGMA…GSNAHVLLGS (421 aa)) enclose the Ketosynthase family 3 (KS3) domain. Residues cysteine 235, histidine 371, and histidine 406 each act as for beta-ketoacyl synthase activity in the active site. The segment at 590 to 909 (TFTGQGAQWA…HKDLLKAVGE (320 aa)) is malonyl-CoA:ACP transacylase (MAT) domain. Positions 961 to 1089 (HDILGSRVLE…GQVCAGSDRE (129 aa)) are N-terminal hotdog fold. Residues 961 to 1230 (HDILGSRVLE…VSNGHVTIDI (270 aa)) are dehydratase (DH) domain. The PKS/mFAS DH domain occupies 961 to 1244 (HDILGSRVLE…MSAIGDAADA (284 aa)). The active-site Proton acceptor; for dehydratase activity is the histidine 993. The interval 1099-1244 (PRQLSRRGWY…MSAIGDAADA (146 aa)) is C-terminal hotdog fold. Aspartate 1160 acts as the Proton donor; for dehydratase activity in catalysis. The tract at residues 1409–1587 (VFLELLAHRK…GFSGINLVSH (179 aa)) is methyltransferase (CMet) domain. The segment at 1803-2119 (GLVDTLCWKS…RGQHIGKIVI (317 aa)) is enoyl reductase (ER) (ER) domain. The interval 2143 to 2322 (RAYLFVGGLG…ASTVNIGVIQ (180 aa)) is ketoreductase (KR) domain. Residues 2447 to 2525 (ETAELLAGEI…DLGVLAQKKL (79 aa)) form the Carrier domain. Serine 2485 bears the O-(pantetheine 4'-phosphoryl)serine mark.

The enzyme catalyses 9 malonyl-CoA + acetyl-CoA + S-adenosyl-L-methionine + 13 NADPH + 20 H(+) = soppiline A + S-adenosyl-L-homocysteine + 9 CO2 + 13 NADP(+) + 10 CoA + 7 H2O. It participates in secondary metabolite biosynthesis. In terms of biological role, highly reducing polyketide synthase; part of the gene cluster that mediates the biosynthesis of the alkylresorcinols called soppilines. The biosynthesis starts with the HR-PKS pspA-catalyzed carbon chain assembly through nine chain elongation cycles, using acetyl CoA and malonyl CoA as a starter and extender units, respectively, to produce the polyketide soppiline A. In the first round, the KR, DH, and CMeT domains work to produce 2-methyl-2-butenyl thioester. In rounds 2 to 5, the KR, DH, and ER domains fully catalyze the reduction of the elongated beta-ketothioester, resulting in the insertion of eight methylene units. The unusual Z,E,Z-triene motif is likely constructed during rounds 6 to 8. Typically, the DH domain introduces a double bond at an alpha,beta-position of an elongated polyketide chain, with the dehydration of a beta-hydroxy group. The last extension cycle would be carried out with L-oriented beta-ketoreduction by the KR domain to produce beta-hydroxy carboxylic acid soppiline A. The type III PKS pspB intercepts the elongated polyketide chain at round 8 from the HR-PKS pspA, followed by a tri-keto extension and decarboxylative aldol cyclization to produce 1,3,5-trisubstituted alkylresorcinol soppiline B. Subsequently, the cytochrome P450 monooxygenase pspC catalyzes three-step oxidations at the C-4 methyl group to carboxylic acid to yield soppiline C. This is Highly reducing polyketide synthase pspA from Penicillium soppii.